We begin with the raw amino-acid sequence, 1446 residues long: ABC transporter G family member 53 (1446 aa).

An ABC transporter 1 domain is found at 153–426 (ANTLHITPNR…FESVGFKCPE (274 aa)). 186–193 (GPPGAGKT) serves as a coordination point for ATP. Residues 504-717 (ELLKANIDRE…AQNAISVNEF (214 aa)) enclose the ABC transmembrane type-2 1 domain. Transmembrane regions (helical) follow at residues 523–543 (VYIF…TVFI), 555–575 (GGIY…NGLA), 610–630 (TPLS…VIGF), 641–661 (FLLL…IAGF), 666–686 (VVAS…GGFI), and 752–772 (IGVG…TICL). An ABC transporter 2 domain is found at 849 to 1101 (ITFEDIRYSV…ELIRYFESIE (253 aa)). 894–901 (GVSGAGKT) serves as a coordination point for ATP. Residues 1174-1388 (TQCLACLWKQ…TLYGLVTSQF (215 aa)) enclose the ABC transmembrane type-2 2 domain. 7 consecutive transmembrane segments (helical) span residues 1195–1215 (AVKY…FWGV), 1225–1242 (LFNA…MGVQ), 1281–1301 (LPYI…MIGF), 1308–1328 (FFWY…YGMM), 1338–1358 (VASV…GFII), 1363–1383 (IPIW…LYGL), and 1415–1435 (FLWV…FLFG).

Belongs to the ABC transporter superfamily. ABCG family. PDR (TC 3.A.1.205) subfamily.

It is found in the membrane. In terms of biological role, may be a general defense protein. The polypeptide is ABC transporter G family member 53 (Oryza sativa subsp. japonica (Rice)).